The primary structure comprises 193 residues: MPVHGVIYYSSPSMATFLSPAQDNLVRTYFAQHLKKWVVQYKLYRNAVTPKTLEFLKQNINPSMLACVDEATMIDAEPELEDIIVRTKLWNFRQSFTIEGSIYEVGSFKVAIANVLQKSVWKGILFHVTYDGTESVDLARPIIQEFFLKCFLQNNKSVTPVYESFFNQPRHSLDSKLLLQLFKQRIDTVSQRT.

Belongs to the Mediator complex subunit 20 family. In terms of assembly, component of the Mediator complex.

Its subcellular location is the nucleus. Component of the Mediator complex, a coactivator involved in the regulated transcription of nearly all RNA polymerase II-dependent genes. Mediator functions as a bridge to convey information from gene-specific regulatory proteins to the basal RNA polymerase II transcription machinery. The Mediator complex, having a compact conformation in its free form, is recruited to promoters by direct interactions with regulatory proteins and serves for the assembly of a functional preinitiation complex with RNA polymerase II and the general transcription factors. This is Mediator of RNA polymerase II transcription subunit 20 (med20) from Schizosaccharomyces pombe (strain 972 / ATCC 24843) (Fission yeast).